We begin with the raw amino-acid sequence, 87 residues long: Putative BTB/POZ domain-containing protein At3g29740 (87 aa).

A BTB domain is found at 24–87 (VDVRLKAGDS…KHTELVALVE (64 aa)).

The protein operates within protein modification; protein ubiquitination. May act as a substrate-specific adapter of an E3 ubiquitin-protein ligase complex (CUL3-RBX1-BTB) which mediates the ubiquitination and subsequent proteasomal degradation of target proteins. This is Putative BTB/POZ domain-containing protein At3g29740 from Arabidopsis thaliana (Mouse-ear cress).